A 198-amino-acid chain; its full sequence is Protein GrpE (198 aa).

Positions 1–14 (MSNEENKINEEALK) are enriched in basic and acidic residues. Residues 1–20 (MSNEENKINEEALKQQDAAE) form a disordered region.

Belongs to the GrpE family. Homodimer.

The protein resides in the cytoplasm. In terms of biological role, participates actively in the response to hyperosmotic and heat shock by preventing the aggregation of stress-denatured proteins, in association with DnaK and GrpE. It is the nucleotide exchange factor for DnaK and may function as a thermosensor. Unfolded proteins bind initially to DnaJ; upon interaction with the DnaJ-bound protein, DnaK hydrolyzes its bound ATP, resulting in the formation of a stable complex. GrpE releases ADP from DnaK; ATP binding to DnaK triggers the release of the substrate protein, thus completing the reaction cycle. Several rounds of ATP-dependent interactions between DnaJ, DnaK and GrpE are required for fully efficient folding. This chain is Protein GrpE, found in Vibrio vulnificus (strain YJ016).